The following is a 318-amino-acid chain: MSNVKHSKLLILGSGPAGYTAAVYAARANLKPVLVTGMQQGGQLTTTTEVENWPGDAEGLTGPALMERMKEHAERFDTEIVFDHINSVDLSSRPFRLTGDSQEYTCDALIISTGASAKYLGLESEEAFKGRGVSACATCDGFFYRNQKVAVVGGGNTAVEEALYLSNIASEVHLVHRRDSFRSEKILIDRLMDKVANGNIVLHTHRTLDEVLGDEMGVTGVRLKDTQSDMTENLDVMGVFIAIGHQPNSQIFEGQLEMKNGYIVVKSGLEGNATQTSIEGVFAAGDVMDHNYRQAITSAGTGCMAALDAERYLDSQGK.

Residue 36–43 (TGMQQGGQ) participates in FAD binding. A disulfide bridge connects residues C136 and C139. An FAD-binding site is contributed by 286–295 (DVMDHNYRQA).

Belongs to the class-II pyridine nucleotide-disulfide oxidoreductase family. As to quaternary structure, homodimer. The cofactor is FAD.

The protein localises to the cytoplasm. It carries out the reaction [thioredoxin]-dithiol + NADP(+) = [thioredoxin]-disulfide + NADPH + H(+). The sequence is that of Thioredoxin reductase (trxB) from Vibrio cholerae serotype O1 (strain ATCC 39315 / El Tor Inaba N16961).